The chain runs to 176 residues: Disulfide bond formation protein B (176 aa).

Topologically, residues Met1–Ala14 are cytoplasmic. A helical transmembrane segment spans residues Trp15–Trp31. Residues Phe32–Cys49 lie on the Periplasmic side of the membrane. A disulfide bridge links Cys41 with Cys44. Residues Ala50–Pro65 form a helical membrane-spanning segment. Topologically, residues Lys66–Tyr71 are cytoplasmic. The chain crosses the membrane as a helical span at residues Val72 to Tyr89. Over Glu90–Gln144 the chain is Periplasmic. The cysteines at positions 104 and 130 are disulfide-linked. A helical transmembrane segment spans residues Trp145 to Ser163. The Cytoplasmic portion of the chain corresponds to Gln164–Arg176.

Belongs to the DsbB family.

It is found in the cell inner membrane. In terms of biological role, required for disulfide bond formation in some periplasmic proteins. Acts by oxidizing the DsbA protein. The sequence is that of Disulfide bond formation protein B from Shigella sonnei (strain Ss046).